The following is a 279-amino-acid chain: Energy-coupling factor transporter ATP-binding protein EcfA1 (279 aa).

The region spanning 5–240 is the ABC transporter domain; that stretch reads IELKKVTFNY…GDELLQLGLD (236 aa). 40–47 is an ATP binding site; the sequence is GHNGSGKS.

The protein belongs to the ABC transporter superfamily. Energy-coupling factor EcfA family. As to quaternary structure, forms a stable energy-coupling factor (ECF) transporter complex composed of 2 membrane-embedded substrate-binding proteins (S component), 2 ATP-binding proteins (A component) and 2 transmembrane proteins (T component).

It localises to the cell membrane. ATP-binding (A) component of a common energy-coupling factor (ECF) ABC-transporter complex. Unlike classic ABC transporters this ECF transporter provides the energy necessary to transport a number of different substrates. The protein is Energy-coupling factor transporter ATP-binding protein EcfA1 of Streptococcus pyogenes serotype M5 (strain Manfredo).